Here is a 510-residue protein sequence, read N- to C-terminus: Secreted RxLR effector protein 24 (510 aa).

The N-terminal stretch at 1–18 (MRGAFYVAIALLGSHTAA) is a signal peptide. Positions 47–68 (RVLRERRDSKDKLTVHAGAEER) match the RxLR-dEER motif.

This sequence belongs to the RxLR effector family.

It is found in the secreted. Its subcellular location is the host nucleus. Secreted effector that acts as an elicitor that induces cell death in host plant cells. The chain is Secreted RxLR effector protein 24 from Plasmopara viticola (Downy mildew of grapevine).